Here is a 297-residue protein sequence, read N- to C-terminus: MAIVLDGKKVAGQIKADLASRVAGLARMGMVPGLGTVLVGDDPGSMKYVEGKHRDCEEVGIASIRRQLPATATTEDVLAVVRDLNEDPACTGYIIQLPLPAHIDSNAIIGAIDPTKDADGMHPYNLGELVLHVRGDITTPLPCTPRGVLALLDAYGIELAGRNVCVLGRGITIGRTIGLMLTRSGVNATVTLCHTGTRNIEEHIRRADVVIAAVGVAGFVQVEHVKPGAVLIDVGVSRVFDEQAGRMRIVGDVDSEAHAVAGAYSPNPGGVGPMTRAMLLANVVEQAERMAGIREDS.

NADP(+) contacts are provided by residues 168–170, T195, and V236; that span reads GRG.

Belongs to the tetrahydrofolate dehydrogenase/cyclohydrolase family. Homodimer.

The catalysed reaction is (6R)-5,10-methylene-5,6,7,8-tetrahydrofolate + NADP(+) = (6R)-5,10-methenyltetrahydrofolate + NADPH. It catalyses the reaction (6R)-5,10-methenyltetrahydrofolate + H2O = (6R)-10-formyltetrahydrofolate + H(+). It functions in the pathway one-carbon metabolism; tetrahydrofolate interconversion. Its function is as follows. Catalyzes the oxidation of 5,10-methylenetetrahydrofolate to 5,10-methenyltetrahydrofolate and then the hydrolysis of 5,10-methenyltetrahydrofolate to 10-formyltetrahydrofolate. The chain is Bifunctional protein FolD from Bifidobacterium animalis subsp. lactis (strain AD011).